The sequence spans 294 residues: Bifunctional protein FolD (294 aa).

NADP(+) is bound by residues glycine 175–serine 177 and isoleucine 241.

Belongs to the tetrahydrofolate dehydrogenase/cyclohydrolase family. As to quaternary structure, homodimer.

It carries out the reaction (6R)-5,10-methylene-5,6,7,8-tetrahydrofolate + NADP(+) = (6R)-5,10-methenyltetrahydrofolate + NADPH. The catalysed reaction is (6R)-5,10-methenyltetrahydrofolate + H2O = (6R)-10-formyltetrahydrofolate + H(+). It participates in one-carbon metabolism; tetrahydrofolate interconversion. Functionally, catalyzes the oxidation of 5,10-methylenetetrahydrofolate to 5,10-methenyltetrahydrofolate and then the hydrolysis of 5,10-methenyltetrahydrofolate to 10-formyltetrahydrofolate. This is Bifunctional protein FolD from Hahella chejuensis (strain KCTC 2396).